Reading from the N-terminus, the 226-residue chain is ATP-dependent dethiobiotin synthetase BioD (226 aa).

T19 is a binding site for Mg(2+). The active site involves K40. Residues D53 and E114 each coordinate Mg(2+). ATP is bound by residues D53, 114–117, and 174–175; these read EGAG and NR.

The protein belongs to the dethiobiotin synthetase family. Homodimer. Requires Mg(2+) as cofactor.

Its subcellular location is the cytoplasm. It carries out the reaction (7R,8S)-7,8-diammoniononanoate + CO2 + ATP = (4R,5S)-dethiobiotin + ADP + phosphate + 3 H(+). It functions in the pathway cofactor biosynthesis; biotin biosynthesis; biotin from 7,8-diaminononanoate: step 1/2. Functionally, catalyzes a mechanistically unusual reaction, the ATP-dependent insertion of CO2 between the N7 and N8 nitrogen atoms of 7,8-diaminopelargonic acid (DAPA, also called 7,8-diammoniononanoate) to form a ureido ring. The polypeptide is ATP-dependent dethiobiotin synthetase BioD (Nitrosospira multiformis (strain ATCC 25196 / NCIMB 11849 / C 71)).